The sequence spans 398 residues: Serpin-Z1C (398 aa).

The tract at residues 343 to 367 (GTEAAASTAIKMALLQARPPSVMDF) is RCL.

Belongs to the serpin family.

Inhibits chymotrypsin and cathepsin G in vitro. This chain is Serpin-Z1C, found in Triticum aestivum (Wheat).